Here is a 437-residue protein sequence, read N- to C-terminus: Replication factor C large subunit (437 aa).

48-55 (GPPGVGKT) contacts ATP. The tract at residues 410-437 (TQASKPTSEEKAEKSKKYYPKRSSSRKT) is disordered. The segment covering 416 to 425 (TSEEKAEKSK) has biased composition (basic and acidic residues). Residues 426–437 (KYYPKRSSSRKT) show a composition bias toward basic residues.

Belongs to the activator 1 small subunits family. RfcL subfamily. Heteromultimer composed of small subunits (RfcS) and large subunits (RfcL).

Part of the RFC clamp loader complex which loads the PCNA sliding clamp onto DNA. This is Replication factor C large subunit from Sulfolobus acidocaldarius (strain ATCC 33909 / DSM 639 / JCM 8929 / NBRC 15157 / NCIMB 11770).